Here is a 632-residue protein sequence, read N- to C-terminus: Probable membrane transporter protein MamO (632 aa).

The chain crosses the membrane as a helical span at residues 25–45 (APVSILAFLILVTFAWGAYLL). Residues 78 to 268 (LYYTVPPAVV…VIVSHLQDVV (191 aa)) are protease-like. H148 and H263 together coordinate a divalent metal cation. 7 consecutive transmembrane segments (helical) span residues 340 to 360 (IGGYSIADILGLGMLALAAGV), 412 to 432 (LVQWDKVKPLIPWGVAGVVIG), 434 to 454 (FIGNAIGDSVVGVLLGLFALI), 513 to 533 (AVLGLPMGLFSGILGISGGVI), 550 to 570 (IANSSVLVFWASVAGSVVAFI), 582 to 602 (APVTLALVMIPGAYVGGILGA), and 612 to 632 (VLKGIYAATMAAIAIKMLTTV). The segment at 365 to 632 (MTMGGGVLQV…AIAIKMLTTV (268 aa)) is TSUP-like.

In the N-terminal section; belongs to the peptidase S1C family. The protein in the C-terminal section; belongs to the 4-toluene sulfonate uptake permease (TSUP) (TC 2.A.102) family. Requires a metal cation as cofactor. In terms of processing, subject to proteolytic cleavage by MamE.

It is found in the magnetosome membrane. Functionally, plays 2 roles; promotes magnetite nucleation/formation and activates the MamE protease. Despite its near conservation of a protease-like sequence, this is probably not a protease. Required in conjunction with MamP for proteolysis of at least MamE, itself and MamP. May transport a solute that controls MamE's protease activity. May place individual iron atoms into the magnetite lattice. One of 7 genes (mamLQBIEMO) able to induce magnetosome membrane biogenesis; coexpression of mamLQRBIEMO in a deletion of the 17 gene mamAB operon restores magnetosome vesicle formation but not magnetite biosynthesis. The sequence is that of Probable membrane transporter protein MamO from Magnetospirillum gryphiswaldense (strain DSM 6361 / JCM 21280 / NBRC 15271 / MSR-1).